The primary structure comprises 60 residues: Large ribosomal subunit protein uL30 (60 aa).

This sequence belongs to the universal ribosomal protein uL30 family. As to quaternary structure, part of the 50S ribosomal subunit.

This Cupriavidus metallidurans (strain ATCC 43123 / DSM 2839 / NBRC 102507 / CH34) (Ralstonia metallidurans) protein is Large ribosomal subunit protein uL30.